Consider the following 403-residue polypeptide: Tryptophan synthase beta chain 1 (403 aa).

Residue Lys96 is modified to N6-(pyridoxal phosphate)lysine.

It belongs to the TrpB family. Tetramer of two alpha and two beta chains. The cofactor is pyridoxal 5'-phosphate.

It catalyses the reaction (1S,2R)-1-C-(indol-3-yl)glycerol 3-phosphate + L-serine = D-glyceraldehyde 3-phosphate + L-tryptophan + H2O. The protein operates within amino-acid biosynthesis; L-tryptophan biosynthesis; L-tryptophan from chorismate: step 5/5. Its function is as follows. The beta subunit is responsible for the synthesis of L-tryptophan from indole and L-serine. This Wolinella succinogenes (strain ATCC 29543 / DSM 1740 / CCUG 13145 / JCM 31913 / LMG 7466 / NCTC 11488 / FDC 602W) (Vibrio succinogenes) protein is Tryptophan synthase beta chain 1 (trpB1).